A 97-amino-acid chain; its full sequence is Histone H1.C2 (97 aa).

The segment at 24–97 (AAVPPKKAAP…KKAVKKAPKK (74 aa)) is disordered. A compositionally biased stretch (basic residues) spans 31–97 (AAPKKAVAKK…KKAVKKAPKK (67 aa)).

The protein resides in the nucleus. It localises to the chromosome. This is Histone H1.C2 from Trypanosoma cruzi.